We begin with the raw amino-acid sequence, 610 residues long: Glutamine--fructose-6-phosphate aminotransferase [isomerizing] (610 aa).

Residue Cys2 is the Nucleophile; for GATase activity of the active site. The Glutamine amidotransferase type-2 domain maps to Cys2–His218. 2 consecutive SIS domains span residues Ala286 to Arg426 and Leu459 to Pro600. Lys605 (for Fru-6P isomerization activity) is an active-site residue.

Homodimer.

It is found in the cytoplasm. The catalysed reaction is D-fructose 6-phosphate + L-glutamine = D-glucosamine 6-phosphate + L-glutamate. Catalyzes the first step in hexosamine metabolism, converting fructose-6P into glucosamine-6P using glutamine as a nitrogen source. The sequence is that of Glutamine--fructose-6-phosphate aminotransferase [isomerizing] from Haemophilus ducreyi (strain 35000HP / ATCC 700724).